Here is a 501-residue protein sequence, read N- to C-terminus: Glucan endo-1,3-beta-glucosidase 3 (501 aa).

An N-terminal signal peptide occupies residues 1-18; that stretch reads MAALLLLFLFLFASSALS. 2 N-linked (GlcNAc...) asparagine glycosylation sites follow: Asn-88 and Asn-107. The active-site Proton donor is Glu-116. 2 N-linked (GlcNAc...) asparagine glycosylation sites follow: Asn-171 and Asn-253. Glu-263 functions as the Nucleophile in the catalytic mechanism. 3 N-linked (GlcNAc...) asparagine glycosylation sites follow: Asn-295, Asn-353, and Asn-357. Cys-361 and Cys-424 are oxidised to a cystine. Asn-451, Asn-456, Asn-457, and Asn-466 each carry an N-linked (GlcNAc...) asparagine glycan. Ser-470 carries the GPI-anchor amidated serine lipid modification. Residues 471-501 constitute a propeptide, removed in mature form; that stretch reads GCIPKYYHHPHASFGDLTLLSLLLIIALVFL.

It belongs to the glycosyl hydrolase 17 family. Contains two additional disulfide bonds.

Its subcellular location is the cell membrane. The catalysed reaction is Hydrolysis of (1-&gt;3)-beta-D-glucosidic linkages in (1-&gt;3)-beta-D-glucans.. This is Glucan endo-1,3-beta-glucosidase 3 from Arabidopsis thaliana (Mouse-ear cress).